The following is a 150-amino-acid chain: Transcriptional repressor NrdR (150 aa).

The segment at 3-34 is a zinc-finger region; it reads CPFCGYEDTFVIDTREIEDQRVIRRRRECPNC. Residues 49 to 139 enclose the ATP-cone domain; it reads IMVIKKDGRR…VYQEFSSLEE (91 aa).

Belongs to the NrdR family. Zn(2+) is required as a cofactor.

Functionally, negatively regulates transcription of bacterial ribonucleotide reductase nrd genes and operons by binding to NrdR-boxes. The sequence is that of Transcriptional repressor NrdR from Dictyoglomus thermophilum (strain ATCC 35947 / DSM 3960 / H-6-12).